The primary structure comprises 508 residues: Photosystem II CP47 reaction center protein (508 aa).

6 helical membrane passes run 21–36, 101–115, 140–156, 203–218, 237–252, and 457–472; these read AVHI…WAGS, IVFS…IWHW, GIHL…FGAF, IAAG…FHLS, VLSS…AFVV, and SFAL…HGAR.

It belongs to the PsbB/PsbC family. PsbB subfamily. PSII is composed of 1 copy each of membrane proteins PsbA, PsbB, PsbC, PsbD, PsbE, PsbF, PsbH, PsbI, PsbJ, PsbK, PsbL, PsbM, PsbT, PsbX, PsbY, PsbZ, Psb30/Ycf12, at least 3 peripheral proteins of the oxygen-evolving complex and a large number of cofactors. It forms dimeric complexes. It depends on Binds multiple chlorophylls. PSII binds additional chlorophylls, carotenoids and specific lipids. as a cofactor.

The protein resides in the plastid. Its subcellular location is the chloroplast thylakoid membrane. One of the components of the core complex of photosystem II (PSII). It binds chlorophyll and helps catalyze the primary light-induced photochemical processes of PSII. PSII is a light-driven water:plastoquinone oxidoreductase, using light energy to abstract electrons from H(2)O, generating O(2) and a proton gradient subsequently used for ATP formation. This chain is Photosystem II CP47 reaction center protein, found in Trachelium caeruleum (Blue throatwort).